The sequence spans 116 residues: Non-specific lipid-transfer protein AP10 (116 aa).

An N-terminal signal peptide occupies residues 1–26 (MKGTSMGVAILAMIVMAQLMVHPSVA). Intrachain disulfides connect cysteine 29–cysteine 76, cysteine 39–cysteine 53, cysteine 54–cysteine 98, and cysteine 74–cysteine 112.

It belongs to the plant LTP family. In terms of tissue distribution, in germinating seeds, detected in the entire surface of the cotyledons, shoot meristem, inter-cotyledon space, primary xylem and immature vascular elements (at protein level). Expressed in seeds, but not the aerial parts of the plant.

It is found in the secreted. The protein resides in the extracellular space. The protein localises to the membrane. Its function is as follows. Plant non-specific lipid-transfer proteins transfer phospholipids as well as galactolipids across membranes. May play a role in wax or cutin deposition in the cell walls of expanding epidermal cells and certain secretory tissues. Permeabilizes the membrane of fungal spores, inhibits germination of the spores of the fungus F.solani at a concentration of 40 ug/ml. Inhibits the growth of F.solani with an IC(50) of 6.5 ug/ml, weakly inhibits the growth of the fungus A.alternata. Binds oleoyl-CoA. This chain is Non-specific lipid-transfer protein AP10, found in Helianthus annuus (Common sunflower).